Consider the following 312-residue polypeptide: Aspartate carbamoyltransferase catalytic subunit (312 aa).

Carbamoyl phosphate is bound by residues Arg58 and Thr59. Lys86 is a binding site for L-aspartate. The carbamoyl phosphate site is built by Arg108, His136, and Gln139. Positions 169 and 223 each coordinate L-aspartate. Gly264 and Pro265 together coordinate carbamoyl phosphate.

It belongs to the aspartate/ornithine carbamoyltransferase superfamily. ATCase family. As to quaternary structure, heterododecamer (2C3:3R2) of six catalytic PyrB chains organized as two trimers (C3), and six regulatory PyrI chains organized as three dimers (R2).

It carries out the reaction carbamoyl phosphate + L-aspartate = N-carbamoyl-L-aspartate + phosphate + H(+). The protein operates within pyrimidine metabolism; UMP biosynthesis via de novo pathway; (S)-dihydroorotate from bicarbonate: step 2/3. In terms of biological role, catalyzes the condensation of carbamoyl phosphate and aspartate to form carbamoyl aspartate and inorganic phosphate, the committed step in the de novo pyrimidine nucleotide biosynthesis pathway. The chain is Aspartate carbamoyltransferase catalytic subunit from Desulforamulus reducens (strain ATCC BAA-1160 / DSM 100696 / MI-1) (Desulfotomaculum reducens).